The following is a 507-amino-acid chain: MLNADLKQQLKQLLELMEGNVEFVASLGSDDKSKELKELLTEISDMSPRLSLSEKSLKRTPSFSVNRPGEETGVTFAGIPLGHEFNSLVLAILQVSGRAPKEKQSIIDQIKNLEGSFHFETFISLTCQKCPDVVQALNLMSVINPNITHSMIDGAVFREESENIMAVPAVFLNGEEFGNGRMTIQDILSKLGSTADASEFENKEPYDVLIVGGGPASGSAAIYTARKGLRTGIVADRIGGQVNDTAGIENFITVKETTGSEFSSNLAAHIDQYDIDAMTGIRATDIEKTDEAIKVTLENGAVLESKTVIIATGAGWRKLNIPGEEQLINKGVAFCPHCDGPLFENKDVAVIGGGNSGVEAAIDLAGIVNHVTLFEFASELKADNVLQDRLRSLSNVDIKTNAKTTEVVGENHVTGIRYEDMSTGEEHLLNLDGIFVQIGLLPNTSWLKDAVELNERGEIVIDRNNNTNVPGIFAAGDVTDQKNKQIIISMGAGANAALNAFDYIIRN.

207-222 (DVLIVGGGPASGSAAI) provides a ligand contact to FAD. Cysteines 335 and 338 form a disulfide. An NAD(+)-binding site is contributed by 347–361 (DVAVIGGGNSGVEAA). Residue 467 to 477 (TNVPGIFAAGD) coordinates FAD.

The protein belongs to the class-II pyridine nucleotide-disulfide oxidoreductase family. As to quaternary structure, homodimer. Requires FAD as cofactor.

In terms of biological role, serves to protect the cell against DNA damage by alkyl hydroperoxides. It can use either NADH or NADPH as electron donor for direct reduction of redox dyes or of alkyl hydroperoxides when combined with the AhpC protein. This is Alkyl hydroperoxide reductase subunit F (ahpF) from Staphylococcus aureus (strain MRSA252).